We begin with the raw amino-acid sequence, 1848 residues long: Cellulose-binding protein A (1848 aa).

The signal sequence occupies residues 1 to 28 (MQKKKSLNLLLALMMVFALVLPSIPALA). Residues 29 to 190 (ATSSMSVEFY…GAKVLGTAPG (162 aa)) enclose the CBM3 domain. Cohesin domains follow at residues 291–428 (VTAT…TVTI), 435–570 (MQIS…SVTI), 668–801 (VTAT…SVTI), 810–943 (VTAT…SVTI), 952–1085 (VTAT…SVTI), 1094–1227 (VTAT…SVTI), 1236–1369 (VTAT…SVTI), 1377–1511 (VKAT…RLTI), and 1709–1847 (FAVK…SVKV).

In terms of processing, the N-terminus is blocked. Post-translationally, glycosylated.

The protein localises to the secreted. In terms of biological role, binds to cellulose fibers and coordinates cellulase enzymes. This chain is Cellulose-binding protein A (cbpA), found in Clostridium cellulovorans.